We begin with the raw amino-acid sequence, 249 residues long: tRNA(Phe) (4-demethylwyosine(37)-C(7)) aminocarboxypropyltransferase (249 aa).

Residues serine 80, arginine 87, glutamate 127, and 154–155 (DN) each bind S-adenosyl-L-methionine.

This sequence belongs to the class I-like SAM-binding methyltransferase superfamily. TRM5/TYW2 family.

Its subcellular location is the cytoplasm. It catalyses the reaction 4-demethylwyosine(37) in tRNA(Phe) + S-adenosyl-L-methionine = 4-demethyl-7-[(3S)-3-amino-3-carboxypropyl]wyosine(37) in tRNA(Phe) + S-methyl-5'-thioadenosine + H(+). Functionally, S-adenosyl-L-methionine-dependent transferase that acts as a component of the wyosine derivatives biosynthesis pathway. Catalyzes the transfer of the alpha-amino-alpha-carboxypropyl (acp) group from S-adenosyl-L-methionine to 4-demethylwyosine (imG-14), forming 7-aminocarboxypropyl-demethylwyosine (wybutosine-86) at position 37 of tRNA(Phe). The polypeptide is tRNA(Phe) (4-demethylwyosine(37)-C(7)) aminocarboxypropyltransferase (Methanocaldococcus jannaschii (strain ATCC 43067 / DSM 2661 / JAL-1 / JCM 10045 / NBRC 100440) (Methanococcus jannaschii)).